A 31-amino-acid chain; its full sequence is MSDIN-like toxin proprotein 8 (31 aa).

The propeptide occupies 1-10 (MSDINTARLP). The segment at residues 11-18 (CIGFLGIP) is a cross-link (cyclopeptide (Cys-Pro)). The propeptide occupies 19 to 31 (SVGDDIEMVLRHG).

It belongs to the MSDIN fungal toxin family. Processed by the macrocyclase-peptidase enzyme POPB to yield a toxic cyclic octapeptide. POPB first removes 10 residues from the N-terminus. Conformational trapping of the remaining peptide forces the enzyme to release this intermediate rather than proceed to macrocyclization. The enzyme rebinds the remaining peptide in a different conformation and catalyzes macrocyclization of the N-terminal 8 residues.

Functionally, probable toxin that belongs to the MSDIN-like toxin family responsible for a large number of food poisoning cases and deaths. The polypeptide is MSDIN-like toxin proprotein 8 (Amanita bisporigera (Destroying angel)).